We begin with the raw amino-acid sequence, 207 residues long: Guanylate kinase (207 aa).

Positions Gly-17–Val-197 constitute a Guanylate kinase-like domain. Position 24–31 (Gly-24–Ser-31) interacts with ATP.

The protein belongs to the guanylate kinase family.

It is found in the cytoplasm. It catalyses the reaction GMP + ATP = GDP + ADP. Functionally, essential for recycling GMP and indirectly, cGMP. This Rhodococcus jostii (strain RHA1) protein is Guanylate kinase.